The primary structure comprises 310 residues: N-acetyl-gamma-glutamyl-phosphate reductase (310 aa).

Residue cysteine 117 is part of the active site.

Belongs to the NAGSA dehydrogenase family. Type 2 subfamily.

Its subcellular location is the cytoplasm. It catalyses the reaction N-acetyl-L-glutamate 5-semialdehyde + phosphate + NADP(+) = N-acetyl-L-glutamyl 5-phosphate + NADPH + H(+). Its pathway is amino-acid biosynthesis; L-arginine biosynthesis; N(2)-acetyl-L-ornithine from L-glutamate: step 3/4. In terms of biological role, catalyzes the NADPH-dependent reduction of N-acetyl-5-glutamyl phosphate to yield N-acetyl-L-glutamate 5-semialdehyde. This Allorhizobium ampelinum (strain ATCC BAA-846 / DSM 112012 / S4) (Agrobacterium vitis (strain S4)) protein is N-acetyl-gamma-glutamyl-phosphate reductase.